A 164-amino-acid chain; its full sequence is Crossover junction endodeoxyribonuclease RuvC (164 aa).

Catalysis depends on residues D7, E67, and D139. Residues D7, E67, and D139 each contribute to the Mg(2+) site.

This sequence belongs to the RuvC family. As to quaternary structure, homodimer which binds Holliday junction (HJ) DNA. The HJ becomes 2-fold symmetrical on binding to RuvC with unstacked arms; it has a different conformation from HJ DNA in complex with RuvA. In the full resolvosome a probable DNA-RuvA(4)-RuvB(12)-RuvC(2) complex forms which resolves the HJ. Mg(2+) is required as a cofactor.

The protein resides in the cytoplasm. The catalysed reaction is Endonucleolytic cleavage at a junction such as a reciprocal single-stranded crossover between two homologous DNA duplexes (Holliday junction).. Its function is as follows. The RuvA-RuvB-RuvC complex processes Holliday junction (HJ) DNA during genetic recombination and DNA repair. Endonuclease that resolves HJ intermediates. Cleaves cruciform DNA by making single-stranded nicks across the HJ at symmetrical positions within the homologous arms, yielding a 5'-phosphate and a 3'-hydroxyl group; requires a central core of homology in the junction. The consensus cleavage sequence is 5'-(A/T)TT(C/G)-3'. Cleavage occurs on the 3'-side of the TT dinucleotide at the point of strand exchange. HJ branch migration catalyzed by RuvA-RuvB allows RuvC to scan DNA until it finds its consensus sequence, where it cleaves and resolves the cruciform DNA. The protein is Crossover junction endodeoxyribonuclease RuvC of Citrifermentans bemidjiense (strain ATCC BAA-1014 / DSM 16622 / JCM 12645 / Bem) (Geobacter bemidjiensis).